The primary structure comprises 209 residues: Ribosomal RNA large subunit methyltransferase E (209 aa).

Residues G63, W65, D83, D99, and D124 each coordinate S-adenosyl-L-methionine. K164 acts as the Proton acceptor in catalysis.

Belongs to the class I-like SAM-binding methyltransferase superfamily. RNA methyltransferase RlmE family.

It localises to the cytoplasm. The catalysed reaction is uridine(2552) in 23S rRNA + S-adenosyl-L-methionine = 2'-O-methyluridine(2552) in 23S rRNA + S-adenosyl-L-homocysteine + H(+). In terms of biological role, specifically methylates the uridine in position 2552 of 23S rRNA at the 2'-O position of the ribose in the fully assembled 50S ribosomal subunit. This Shewanella oneidensis (strain ATCC 700550 / JCM 31522 / CIP 106686 / LMG 19005 / NCIMB 14063 / MR-1) protein is Ribosomal RNA large subunit methyltransferase E.